Consider the following 463-residue polypeptide: A-type ATP synthase subunit B (463 aa).

This sequence belongs to the ATPase alpha/beta chains family. As to quaternary structure, has multiple subunits with at least A(3), B(3), C, D, E, F, H, I and proteolipid K(x).

The protein localises to the cell membrane. Functionally, component of the A-type ATP synthase that produces ATP from ADP in the presence of a proton gradient across the membrane. The B chain is a regulatory subunit. The chain is A-type ATP synthase subunit B from Methanothrix thermoacetophila (strain DSM 6194 / JCM 14653 / NBRC 101360 / PT) (Methanosaeta thermophila).